Consider the following 110-residue polypeptide: Large ribosomal subunit protein uL24 (110 aa).

The protein belongs to the universal ribosomal protein uL24 family. In terms of assembly, part of the 50S ribosomal subunit.

Functionally, one of two assembly initiator proteins, it binds directly to the 5'-end of the 23S rRNA, where it nucleates assembly of the 50S subunit. Its function is as follows. One of the proteins that surrounds the polypeptide exit tunnel on the outside of the subunit. The polypeptide is Large ribosomal subunit protein uL24 (Frankia alni (strain DSM 45986 / CECT 9034 / ACN14a)).